A 1877-amino-acid chain; its full sequence is Proprotein convertase subtilisin/kexin type 5 (1877 aa).

The first 34 residues, 1–34 (MDWDWGNRCSRPGRRDLLCVLALLAGCLLPVCRT), serve as a signal peptide directing secretion. Residues 35-116 (RVYTNHWAVK…QQVVKKRTKR (82 aa)) constitute a propeptide that is removed on maturation. Over 117–1768 (DYDLSHAQST…EAEFYEHTKT (1652 aa)) the chain is Extracellular. In terms of domain architecture, Peptidase S8 spans 136–455 (MWYMHCSDNT…FGLMDAEAMV (320 aa)). Active-site charge relay system residues include Asp173 and His214. Asn227 and Asn383 each carry an N-linked (GlcNAc...) asparagine glycan. Ser388 functions as the Charge relay system in the catalytic mechanism. The 141-residue stretch at 463–603 (TVPQQHVCVE…SLVLYGTSVQ (141 aa)) folds into the P/Homo B domain. Positions 521–523 (RGD) match the Cell attachment site motif. FU repeat units lie at residues 632–682 (EDYA…GHYH), 685–732 (KKRC…GSYE), 736–779 (KNVC…GQFF), 781–826 (GHDC…SYYL), 834–881 (YKSC…GEYI), 884–929 (QGHC…WKFE), 931–981 (KKQC…GHYP), 984–1030 (GHAC…GEFQ), 1034–1079 (YEEC…KTFG), 1081–1123 (KWEC…GFHG), 1127–1168 (LGEC…STWP), 1206–1248 (TSQN…GTWP), 1252–1299 (SGSC…GFYA), 1301–1345 (DGVC…KHVA), 1347–1390 (EGVC…SFYP), 1392–1438 (MRQC…GTYK), 1442–1487 (NDEC…VEYW), 1491–1536 (SHRC…GYHT), 1540–1585 (SQQC…GYYG), 1589–1636 (SGRC…HYYA), 1640–1685 (AQTC…GEYR), and 1691–1738 (NFNC…SHSR). The tract at residues 638-1753 (CDPECSEVGC…CDCQSSTDEC (1116 aa)) is CRM (Cys-rich motif). Asn667 carries N-linked (GlcNAc...) asparagine glycosylation. Residues Asn754, Asn804, and Asn854 are each glycosylated (N-linked (GlcNAc...) asparagine). N-linked (GlcNAc...) asparagine glycosylation is found at Asn951 and Asn1016. N-linked (GlcNAc...) asparagine glycosylation is present at Asn1220. Asn1317 carries N-linked (GlcNAc...) asparagine glycosylation. An N-linked (GlcNAc...) asparagine glycan is attached at Asn1523. N-linked (GlcNAc...) asparagine glycosylation is found at Asn1711 and Asn1733. The chain crosses the membrane as a helical span at residues 1769–1789 (ALLVTSGAMLLLLLGAAAVVW). Over 1790–1877 (RKSRSRPVAK…EYDDESYSYQ (88 aa)) the chain is Cytoplasmic. 2 AC regions span residues 1825 to 1844 (VIEY…IVYM) and 1856 to 1877 (YGLL…YSYQ).

The protein belongs to the peptidase S8 family. As to expression, PC5A is expressed in most tissues but is most abundant in the intestine and adrenals. PC5B is expressed in the intestine, adrenals and lung but not in the brain.

It localises to the secreted. The protein localises to the endomembrane system. Functionally, serine endoprotease that processes various proproteins by cleavage at paired basic amino acids, recognizing the RXXX[KR]R consensus motif. Likely functions in the constitutive and regulated secretory pathways. Plays an essential role in pregnancy establishment by proteolytic activation of a number of important factors such as BMP2, CALD1 and alpha-integrins. May be responsible for the maturation of gastrointestinal peptides. May be involved in the cellular proliferation of adrenal cortex via the activation of growth factors. In Mus musculus (Mouse), this protein is Proprotein convertase subtilisin/kexin type 5 (Pcsk5).